The sequence spans 3530 residues: Unconventional myosin-XV (3530 aa).

Disordered stretches follow at residues 1-46 (MAKE…RTPK), 615-710 (AGMD…PAHV), and 730-1057 (EVPP…QKTL). Pro residues predominate over residues 663–681 (PPVPPRPPSSGPPPAPPLS). Low complexity-rich tracts occupy residues 682-693 (PALSGLPRPASP), 753-763 (AAFGFPGASPR), and 823-835 (SPAPRRAAGRLGP). The span at 836-850 (PGSPLPGSPRPPSPP) shows a compositional bias: pro residues. Residues 859–869 (RSSLNLPSRLP) are compositionally biased toward low complexity. Residues 903–913 (PLEHRESPREP) are compositionally biased toward basic and acidic residues. Residues 1027 to 1038 (TKPPTPAPPKDV) are compositionally biased toward pro residues. Residues 1222-1899 (DGVEDMTQLE…LYQLLESMRE (678 aa)) enclose the Myosin motor domain. ATP is bound at residue 1315 to 1322 (GESGSGKT). The stretch at 1323-1350 (EATKLILRYLAAMNQKREVMQQIKILEA) forms a coiled coil. The actin-binding stretch occupies residues 1792 to 1799 (FMRCLKPN). The neck or regulatory domain stretch occupies residues 1888 to 2029 (EHLYQLLESM…AQVPQVAPVR (142 aa)). IQ domains are found at residues 1902–1924 (LNLAALTLQRCLRGFFIKRRFRS), 1925–1954 (LRHKIILLQSRARGYLARQRYQQMRRSLVK), and 1955–1976 (FRSLVHAYVSRRRYLKLRAEWR). Residues 2030-3530 (TPRLQAEPRV…TLPPSEITLL (1501 aa)) are tail. Residues 2065 to 2217 (MLTVPLRTPL…PTQLEWTATY (153 aa)) enclose the MyTH4 1 domain. 4 disordered regions span residues 2311–2381 (AASR…GEPA), 2414–2446 (YRMKGGGQPGGGSSSGTEDTPRRPPEPKPIPGL), 2490–2509 (AEKPPAPEAQPTSVGTGPPA), and 2644–2665 (TSAPRPSMAPTSALPSRSLEPP). A compositionally biased stretch (polar residues) spans 2349 to 2371 (GYSSHNQDGTNGETEAQRGTATH). Positions 2417 to 2427 (KGGGQPGGGSS) are enriched in gly residues. Positions 2867–2953 (KDSDYVVAVR…PSELVQPAAA (87 aa)) constitute an SH3 domain. Positions 3050 to 3204 (FTKTPLQESL…PSSIELRAML (155 aa)) constitute a MyTH4 2 domain. An FERM domain is found at 3209-3530 (SKRQLFLLPG…TLPPSEITLL (322 aa)).

The protein belongs to the TRAFAC class myosin-kinesin ATPase superfamily. Myosin family. In terms of assembly, interacts with the third PDZ domain of WHRN which is necessary for localization of WHRN to stereocilium tips. Interacts with EPS8. Interacts with FASLG. Highly expressed in pituitary. Also expressed at lower levels in adult brain, kidney, liver, lung, pancreas, placenta and skeletal muscle. Not expressed in brain. In the pituitary, highly expressed in anterior gland cells.

The protein localises to the cell projection. It is found in the stereocilium. The protein resides in the cytoplasm. Its subcellular location is the cytoskeleton. Functionally, myosins are actin-based motor molecules with ATPase activity. Unconventional myosins serve in intracellular movements. Their highly divergent tails are presumed to bind to membranous compartments, which would be moved relative to actin filaments. Required for the arrangement of stereocilia in mature hair bundles. The sequence is that of Unconventional myosin-XV (MYO15A) from Homo sapiens (Human).